A 355-amino-acid polypeptide reads, in one-letter code: C-C chemokine receptor type 3 (355 aa).

Residues 1-34 (MTTSLDTVETFGPTSYDDDMGLLCEKADVGALIA) are Extracellular-facing. A helical transmembrane segment spans residues 35-62 (QFVPPLYSLVFMVGLLGNVVVVMILIKY). The Cytoplasmic segment spans residues 63 to 72 (RRLRIMTNIY). Residues 73–93 (LLNLAISDLLFLFTLPFWIHY) traverse the membrane as a helical segment. Topologically, residues 94 to 107 (VRERNWVFSHGMCK) are extracellular. Cysteine 106 and cysteine 183 are oxidised to a cystine. A helical membrane pass occupies residues 108–129 (VLSGFYHTGLYSEIFFIILLTI). Over 130-146 (DRYLAIVHAVFALRART) the chain is Cytoplasmic. A helical membrane pass occupies residues 147-171 (VTFGVITSIVTWGLAVLAALPEFIF). The Extracellular portion of the chain corresponds to 172 to 203 (YGTEKLFPKTLCSAIYPQDTVYSWRHFHTLKM). Residues 204 to 223 (TILCLALPLLVMAICYTGII) traverse the membrane as a helical segment. Residues 224–239 (KTLLRCPSKKKYKAIR) lie on the Cytoplasmic side of the membrane. Residues 240-264 (LIFVIMAVFFIFWTPYNVAILISTY) form a helical membrane-spanning segment. At 265–281 (QSVLFGLDCERSKHLDL) the chain is on the extracellular side. A helical transmembrane segment spans residues 282–305 (FVLATEVIAYSHCCVNPVIYAFVG). Residues 306-355 (ERFRKYLRHFFHRHVLMHLGKYIPFLPSEKLERTSSVSPSTAEPELSIVF) lie on the Cytoplasmic side of the membrane.

This sequence belongs to the G-protein coupled receptor 1 family.

It is found in the cell membrane. Its function is as follows. Receptor for C-C type chemokine. Binds and responds to a variety of chemokines, including CCL11, CCL26, CCL7, CCL13, RANTES(CCL5) and CCL15. Subsequently transduces a signal by increasing the intracellular calcium ions level. In addition acts as a possible functional receptor for NARS1. The chain is C-C chemokine receptor type 3 (CCR3) from Macaca mulatta (Rhesus macaque).